Consider the following 548-residue polypeptide: Thermostable neutral protease NprT (548 aa).

A signal peptide spans 1–25 (MNKRAMLGAIGLAFGLLAAPIGASA). Positions 26–229 (KGESIVWNEQ…DSRQPGGGQP (204 aa)) are cleaved as a propeptide — activation peptide. Residues D289, D291, Q293, and D370 each contribute to the Ca(2+) site. Position 374 (H374) interacts with Zn(2+). E375 is a catalytic residue. Zn(2+)-binding residues include H378 and E398. Residues E409, N415, D417, E419, E422, Y425, T426, V429, and D432 each coordinate Ca(2+). H463 acts as the Proton donor in catalysis.

This sequence belongs to the peptidase M4 family. Ca(2+) is required as a cofactor. The cofactor is Zn(2+).

The protein resides in the secreted. Its activity is regulated as follows. Its casein hydrolytic activity is inhibited almost completely by a chelating agent (EDTA), whereas neither diisopropyl fluorophosphate nor phenylmethylsulfonyl fluoride inhibit the proteolytic activity in vitro. In terms of biological role, extracellular zinc metalloprotease. The protein is Thermostable neutral protease NprT (nprT) of Geobacillus stearothermophilus (Bacillus stearothermophilus).